A 337-amino-acid polypeptide reads, in one-letter code: Fructose-1,6-bisphosphatase class 1 (337 aa).

Mg(2+) is bound by residues Glu-94, Asp-116, Leu-118, and Asp-119. Substrate-binding positions include 119–122 (DGSS), Asn-210, and Lys-276. Mg(2+) is bound at residue Glu-282.

It belongs to the FBPase class 1 family. In terms of assembly, homotetramer. Mg(2+) is required as a cofactor.

The protein localises to the cytoplasm. It carries out the reaction beta-D-fructose 1,6-bisphosphate + H2O = beta-D-fructose 6-phosphate + phosphate. Its pathway is carbohydrate biosynthesis; gluconeogenesis. In Burkholderia vietnamiensis (strain G4 / LMG 22486) (Burkholderia cepacia (strain R1808)), this protein is Fructose-1,6-bisphosphatase class 1.